A 375-amino-acid chain; its full sequence is Neutral protease 2 homolog MGYG_00813 (375 aa).

A signal peptide spans 1–19; sequence MQVIVALAALSSLAAPALG. A propeptide spanning residues 20–190 is cleaved from the precursor; sequence FSIPRGVPVS…SGPLTRIGKR (171 aa). 2 disulfide bridges follow: Cys-198–Cys-268 and Cys-275–Cys-293. A Zn(2+)-binding site is contributed by His-318. Glu-319 is an active-site residue. His-322 and Asp-333 together coordinate Zn(2+).

The protein belongs to the peptidase M35 family. It depends on Zn(2+) as a cofactor.

It localises to the secreted. It carries out the reaction Preferential cleavage of bonds with hydrophobic residues in P1'. Also 3-Asn-|-Gln-4 and 8-Gly-|-Ser-9 bonds in insulin B chain.. Its function is as follows. Secreted metalloproteinase that allows assimilation of proteinaceous substrates. Shows high activities on basic nuclear substrates such as histone and protamine. May be involved in virulence. This is Neutral protease 2 homolog MGYG_00813 from Arthroderma gypseum (strain ATCC MYA-4604 / CBS 118893) (Microsporum gypseum).